The following is a 209-amino-acid chain: Thiamine-phosphate synthase (209 aa).

Residues 36 to 40 (QLRDK) and Asn-68 contribute to the 4-amino-2-methyl-5-(diphosphooxymethyl)pyrimidine site. Mg(2+)-binding residues include Asp-69 and Asp-88. Ser-107 is a binding site for 4-amino-2-methyl-5-(diphosphooxymethyl)pyrimidine. Residue 133–135 (TNS) coordinates 2-[(2R,5Z)-2-carboxy-4-methylthiazol-5(2H)-ylidene]ethyl phosphate. Position 136 (Lys-136) interacts with 4-amino-2-methyl-5-(diphosphooxymethyl)pyrimidine. 2-[(2R,5Z)-2-carboxy-4-methylthiazol-5(2H)-ylidene]ethyl phosphate contacts are provided by residues Gly-164 and 184–185 (IT).

This sequence belongs to the thiamine-phosphate synthase family. Requires Mg(2+) as cofactor.

It carries out the reaction 2-[(2R,5Z)-2-carboxy-4-methylthiazol-5(2H)-ylidene]ethyl phosphate + 4-amino-2-methyl-5-(diphosphooxymethyl)pyrimidine + 2 H(+) = thiamine phosphate + CO2 + diphosphate. It catalyses the reaction 2-(2-carboxy-4-methylthiazol-5-yl)ethyl phosphate + 4-amino-2-methyl-5-(diphosphooxymethyl)pyrimidine + 2 H(+) = thiamine phosphate + CO2 + diphosphate. The catalysed reaction is 4-methyl-5-(2-phosphooxyethyl)-thiazole + 4-amino-2-methyl-5-(diphosphooxymethyl)pyrimidine + H(+) = thiamine phosphate + diphosphate. It functions in the pathway cofactor biosynthesis; thiamine diphosphate biosynthesis; thiamine phosphate from 4-amino-2-methyl-5-diphosphomethylpyrimidine and 4-methyl-5-(2-phosphoethyl)-thiazole: step 1/1. Its function is as follows. Condenses 4-methyl-5-(beta-hydroxyethyl)thiazole monophosphate (THZ-P) and 2-methyl-4-amino-5-hydroxymethyl pyrimidine pyrophosphate (HMP-PP) to form thiamine monophosphate (TMP). This Shouchella clausii (strain KSM-K16) (Alkalihalobacillus clausii) protein is Thiamine-phosphate synthase.